The following is a 176-amino-acid chain: MAIREILTVPDPRLKQVSKPVEGGVTDDIRALMDDMLETMYDAPGIGLAAIQIGVPLRVIVMDLAREGEEPAPRYFVNPEILETIEEKKPYEEGCLSVPDIFDQVERSARCRIRYLDYDGKQVDEWAEDLYAVCIQHEMDHLEGTLFIDYLSRLKRDRAIDKVKKAKIRAIREDAN.

Fe cation-binding residues include cysteine 95 and histidine 137. Glutamate 138 is an active-site residue. A Fe cation-binding site is contributed by histidine 141.

This sequence belongs to the polypeptide deformylase family. It depends on Fe(2+) as a cofactor.

The catalysed reaction is N-terminal N-formyl-L-methionyl-[peptide] + H2O = N-terminal L-methionyl-[peptide] + formate. Its function is as follows. Removes the formyl group from the N-terminal Met of newly synthesized proteins. Requires at least a dipeptide for an efficient rate of reaction. N-terminal L-methionine is a prerequisite for activity but the enzyme has broad specificity at other positions. The chain is Peptide deformylase from Hyphomonas neptunium (strain ATCC 15444).